Here is a 303-residue protein sequence, read N- to C-terminus: MSSRPPASFSATFSAARSSKCVPPPRRPSTDVSLPSLRDTIQAHGLDAKKSLGQHFLLDPGICARIAALGGDLTGRSVVEIGPGPGGLTRALLDTPASRVDVVEIDERAWPLLDELATYYPDRLHVVRQDALKLDAATLAPAPRQIIANLPYNVATPLLVGWLRQASQWERLSLMFQLEVAERICAAPGSSAYGRLAVLSQWCASCSVALRIPPAAFSPPPKVHSAVAVIIPHAEQPSPQLFRAMEQVTAAAFGQRRKMLRSSLKSIGGERLLEQAEIEPTRRAETLSVAEFARLAELNLASR.

Residues 1–19 (MSSRPPASFSATFSAARSS) are compositionally biased toward low complexity. Positions 1 to 34 (MSSRPPASFSATFSAARSSKCVPPPRRPSTDVSL) are disordered. S-adenosyl-L-methionine is bound by residues His55, Leu57, Gly82, Glu104, Asp130, and Asn149.

This sequence belongs to the class I-like SAM-binding methyltransferase superfamily. rRNA adenine N(6)-methyltransferase family. RsmA subfamily.

Its subcellular location is the cytoplasm. The catalysed reaction is adenosine(1518)/adenosine(1519) in 16S rRNA + 4 S-adenosyl-L-methionine = N(6)-dimethyladenosine(1518)/N(6)-dimethyladenosine(1519) in 16S rRNA + 4 S-adenosyl-L-homocysteine + 4 H(+). In terms of biological role, specifically dimethylates two adjacent adenosines (A1518 and A1519) in the loop of a conserved hairpin near the 3'-end of 16S rRNA in the 30S particle. May play a critical role in biogenesis of 30S subunits. The chain is Ribosomal RNA small subunit methyltransferase A from Gluconobacter oxydans (strain 621H) (Gluconobacter suboxydans).